Consider the following 158-residue polypeptide: Transcriptional regulator MraZ (158 aa).

SpoVT-AbrB domains are found at residues 7–54 (NIEA…PEEV) and 84–127 (VEII…AKER).

This sequence belongs to the MraZ family. As to quaternary structure, forms oligomers.

It localises to the cytoplasm. The protein localises to the nucleoid. In Bacteroides fragilis (strain ATCC 25285 / DSM 2151 / CCUG 4856 / JCM 11019 / LMG 10263 / NCTC 9343 / Onslow / VPI 2553 / EN-2), this protein is Transcriptional regulator MraZ.